A 389-amino-acid polypeptide reads, in one-letter code: Putative RNA methyltransferase R405 (389 aa).

3 residues coordinate S-adenosyl-L-methionine: Gln207, Asp261, and Asp314. Cys342 (nucleophile) is an active-site residue.

It belongs to the class I-like SAM-binding methyltransferase superfamily. RNA M5U methyltransferase family.

This Acanthamoeba polyphaga (Amoeba) protein is Putative RNA methyltransferase R405.